Consider the following 229-residue polypeptide: Triosephosphate isomerase (229 aa).

Position 9–11 (9–11) interacts with substrate; it reads NYK. The Electrophile role is filled by H93. E141 acts as the Proton acceptor in catalysis. Substrate contacts are provided by residues I146, G180, and 201–202; that span reads AS.

It belongs to the triosephosphate isomerase family. In terms of assembly, homotetramer; dimer of dimers.

It localises to the cytoplasm. It carries out the reaction D-glyceraldehyde 3-phosphate = dihydroxyacetone phosphate. Its pathway is carbohydrate biosynthesis; gluconeogenesis. The protein operates within carbohydrate degradation; glycolysis; D-glyceraldehyde 3-phosphate from glycerone phosphate: step 1/1. Involved in the gluconeogenesis. Catalyzes stereospecifically the conversion of dihydroxyacetone phosphate (DHAP) to D-glyceraldehyde-3-phosphate (G3P). The polypeptide is Triosephosphate isomerase (Sulfurisphaera tokodaii (strain DSM 16993 / JCM 10545 / NBRC 100140 / 7) (Sulfolobus tokodaii)).